A 952-amino-acid polypeptide reads, in one-letter code: Substrate-adhesion molecule (952 aa).

A signal peptide spans 1–25 (MKSQKIGSMILLIGILLAIFNFAYS). Residues 26–527 (DDDIERFSIN…TWFFDTNVET (502 aa)) are Extracellular-facing. 5 N-linked (GlcNAc...) asparagine glycosylation sites follow: N78, N182, N231, N243, and N412. An EGF-like domain is found at 438-471 (EIRRCKDSCNGYGTCNTANYTCVCDSAHMGETCN). 3 disulfides stabilise this stretch: C442–C452, C446–C459, and C461–C470. An N-linked (GlcNAc...) asparagine glycan is attached at N456. A helical membrane pass occupies residues 528–548 (GVIALACIFIAFVGILYIIDI). Topologically, residues 549–591 (GTTVPIDIKRAKDYAEENKSGQFPKATHEEASVLWWRDQRSHK) are cytoplasmic. The chain crosses the membrane as a helical span at residues 592 to 612 (AWTFMDQFQLISLVSHIGVVF). Topologically, residues 613–678 (PSRFISFTEY…GDLYLLPNIL (66 aa)) are extracellular. Residues 679 to 699 (FWFGLLLGVFLVPLLLAYAII) form a helical membrane-spanning segment. Residues 700-722 (SFMESLIHWKEVVTNRLIHVLVR) are Cytoplasmic-facing. A helical membrane pass occupies residues 723–743 (ILTFGYIGVLIAASFAMVTPL). Topologically, residues 744 to 752 (HDYRIIIPG) are extracellular. A helical membrane pass occupies residues 753-773 (AIIFVLYGIGLPIAIWFLLAV). Over 774-801 (PEARLHNPTFKQRFGCLYVHYKPKTDHR) the chain is Cytoplasmic. Residues 802–822 (FVVFMFIKRFIMAVIIGILSF) form a helical membrane-spanning segment. At 823 to 837 (KPMTNYPLTGTDLAV) the chain is on the extracellular side. The helical transmembrane segment at 838 to 858 (PIVQVVVIDIALIGYAVLLFI) threads the bilayer. The Cytoplasmic portion of the chain corresponds to 859–868 (RKPYFDHYQL). A helical transmembrane segment spans residues 869–889 (WLEYLLTAINIVTVSLSLTHI). At 890-897 (KSPSAAGE) the chain is on the extracellular side. A helical transmembrane segment spans residues 898–918 (LIACLIQALALVACIAAYVVA). Residues 919-952 (WLQMRSSFIKKVKKYLCCCCKSSKSSGEIDLSKK) lie on the Cytoplasmic side of the membrane.

It localises to the cell membrane. Involved in substrate adhesion, myosin-independent cytokinesis, organization of actin cytoskeleton, and phagocytosis. This Dictyostelium discoideum (Social amoeba) protein is Substrate-adhesion molecule (sadA).